A 449-amino-acid polypeptide reads, in one-letter code: Bifunctional protein GlmU (449 aa).

A pyrophosphorylase region spans residues 1–226 (MVAVAILAAG…FQEISGINDR (226 aa)). Residues 7 to 10 (LAAG), Lys-21, Gln-73, and 78 to 79 (GT) contribute to the UDP-N-acetyl-alpha-D-glucosamine site. Asp-103 provides a ligand contact to Mg(2+). UDP-N-acetyl-alpha-D-glucosamine is bound by residues Gly-140, Glu-155, Asn-170, and Asn-224. Asn-224 contacts Mg(2+). Residues 227–247 (FQLSAAYEILQDRIKEKWMKA) form a linker region. Residues 248–449 (GVMIHQPDTV…KEIKGWRLQS (202 aa)) form an N-acetyltransferase region. UDP-N-acetyl-alpha-D-glucosamine-binding residues include Arg-329 and Lys-347. The Proton acceptor role is filled by His-359. The UDP-N-acetyl-alpha-D-glucosamine site is built by Tyr-362 and Asn-373. Acetyl-CoA-binding positions include Ala-376, 382 to 383 (NY), Ala-419, and Arg-436.

In the N-terminal section; belongs to the N-acetylglucosamine-1-phosphate uridyltransferase family. It in the C-terminal section; belongs to the transferase hexapeptide repeat family. In terms of assembly, homotrimer. Requires Mg(2+) as cofactor.

It is found in the cytoplasm. The catalysed reaction is alpha-D-glucosamine 1-phosphate + acetyl-CoA = N-acetyl-alpha-D-glucosamine 1-phosphate + CoA + H(+). It catalyses the reaction N-acetyl-alpha-D-glucosamine 1-phosphate + UTP + H(+) = UDP-N-acetyl-alpha-D-glucosamine + diphosphate. The protein operates within nucleotide-sugar biosynthesis; UDP-N-acetyl-alpha-D-glucosamine biosynthesis; N-acetyl-alpha-D-glucosamine 1-phosphate from alpha-D-glucosamine 6-phosphate (route II): step 2/2. It participates in nucleotide-sugar biosynthesis; UDP-N-acetyl-alpha-D-glucosamine biosynthesis; UDP-N-acetyl-alpha-D-glucosamine from N-acetyl-alpha-D-glucosamine 1-phosphate: step 1/1. Its pathway is bacterial outer membrane biogenesis; LPS lipid A biosynthesis. Catalyzes the last two sequential reactions in the de novo biosynthetic pathway for UDP-N-acetylglucosamine (UDP-GlcNAc). The C-terminal domain catalyzes the transfer of acetyl group from acetyl coenzyme A to glucosamine-1-phosphate (GlcN-1-P) to produce N-acetylglucosamine-1-phosphate (GlcNAc-1-P), which is converted into UDP-GlcNAc by the transfer of uridine 5-monophosphate (from uridine 5-triphosphate), a reaction catalyzed by the N-terminal domain. The polypeptide is Bifunctional protein GlmU (Picosynechococcus sp. (strain ATCC 27264 / PCC 7002 / PR-6) (Agmenellum quadruplicatum)).